The primary structure comprises 176 residues: Cell division protein ZapC (176 aa).

It belongs to the ZapC family. As to quaternary structure, interacts directly with FtsZ.

The protein resides in the cytoplasm. Functionally, contributes to the efficiency of the cell division process by stabilizing the polymeric form of the cell division protein FtsZ. Acts by promoting interactions between FtsZ protofilaments and suppressing the GTPase activity of FtsZ. This is Cell division protein ZapC from Pseudoalteromonas translucida (strain TAC 125).